Consider the following 348-residue polypeptide: Aminotransferase atnJ (348 aa).

Arginine 79 is a binding site for pyridoxal 5'-phosphate. Lysine 180 is subject to N6-(pyridoxal phosphate)lysine. A pyridoxal 5'-phosphate-binding site is contributed by glutamate 216.

This sequence belongs to the class-IV pyridoxal-phosphate-dependent aminotransferase family. The cofactor is pyridoxal 5'-phosphate.

It participates in secondary metabolite biosynthesis. Aminotransferase; part of the gene cluster that mediates the biosynthesis of aspercryptins, linear lipopeptides built from six amino acids including 2 highly unusual and nonproteogenic amino acids, 2-amino-octanoic acid (2aoa) and 2-amino-dodecanol (2adol). The core structure of aspercryptins is as follows: Ser/Ala-Thr-Ile/Val-2aoa-Asn-2adol. The first step of aspercryptin biosynthesis is the generation of the fatty acid precursors, octanoic and dodecanoic acids, by the FAS subunits atnF and atnM. The fatty acid precursors are likely transformed into the corresponding alpha-amino fatty acids in three steps. First, they are hydroxylated by the cytochrome P450 monooxygenase atnE, then oxidized to the corresponding alpha-keto acids by the NAD(P)-dependent oxidoreductase atnD, and finally converted to the alpha-amino fatty acids by the PLP-dependent aminotransferases atnH or atnJ. the alpha-amino fatty acids, 2-amino-octanoic and 2-amino-dodecanoic acids, are recognized, activated, and covalently tethered to the NRPS atnA by its fourth and sixth adenylation domains. The second module of atnA is the Thr module and contains an epimerase (E) domain responsible for the epimerization of Thr to D-allo-Thr. Additionally, despite atnA having only one epimerase domain, the first amino acid of aspercryptin A1 is D-Ser, suggesting that serine is either loaded directly as D-Ser on the first module or that the epimerase domain in the threonine module epimerizes both L-Ser and L-Thr. After condensation of the hexapeptide of aspercryptin, the C-terminal reductase (TE) domain might be involved in the reductive release and production of the aldehyde hexapeptide. Further reduction would generate aspercryptins. The variety of aspercryptins produced reflects the flexibility of the atnA NRPS, allowing incorporation of alanine instead of serine, valine for isoleucine, and a C10 fatty amino alcohol instead of the C12 version. AtnB seems to be involved in the selectivity for Ile versus Val by the third module. Moreover, type B, C and D aspercryptins have an additional N-terminal cichorine, acetyl and propionyl group respectively. This Emericella nidulans (strain FGSC A4 / ATCC 38163 / CBS 112.46 / NRRL 194 / M139) (Aspergillus nidulans) protein is Aminotransferase atnJ.